The chain runs to 272 residues: Small ribosomal subunit protein uS2 (272 aa).

Positions 238–272 (ASKEEQTEEAEEETLSSKYREQDFQEAKSGARGEK) are disordered. Residues 255–272 (KYREQDFQEAKSGARGEK) show a composition bias toward basic and acidic residues.

Belongs to the universal ribosomal protein uS2 family.

In Protochlamydia amoebophila (strain UWE25), this protein is Small ribosomal subunit protein uS2.